The primary structure comprises 398 residues: Enolase (398 aa).

(2R)-2-phosphoglycerate is bound at residue Gln154. Glu196 acts as the Proton donor in catalysis. Residues Asp232, Glu273, and Asp300 each coordinate Mg(2+). (2R)-2-phosphoglycerate is bound by residues Lys325, Arg354, Ser355, and Lys376. Lys325 functions as the Proton acceptor in the catalytic mechanism.

It belongs to the enolase family. It depends on Mg(2+) as a cofactor.

It is found in the cytoplasm. Its subcellular location is the secreted. The protein localises to the cell surface. It carries out the reaction (2R)-2-phosphoglycerate = phosphoenolpyruvate + H2O. It functions in the pathway carbohydrate degradation; glycolysis; pyruvate from D-glyceraldehyde 3-phosphate: step 4/5. In terms of biological role, catalyzes the reversible conversion of 2-phosphoglycerate (2-PG) into phosphoenolpyruvate (PEP). It is essential for the degradation of carbohydrates via glycolysis. The chain is Enolase from Natronomonas pharaonis (strain ATCC 35678 / DSM 2160 / CIP 103997 / JCM 8858 / NBRC 14720 / NCIMB 2260 / Gabara) (Halobacterium pharaonis).